The chain runs to 92 residues: Small ribosomal subunit protein bS6 (92 aa).

The protein belongs to the bacterial ribosomal protein bS6 family.

Its function is as follows. Binds together with bS18 to 16S ribosomal RNA. This chain is Small ribosomal subunit protein bS6, found in Clostridioides difficile (strain 630) (Peptoclostridium difficile).